We begin with the raw amino-acid sequence, 318 residues long: Type II restriction enzyme HaeIII (318 aa).

The catalysed reaction is Endonucleolytic cleavage of DNA to give specific double-stranded fragments with terminal 5'-phosphates.. In terms of biological role, a P subtype restriction enzyme that recognizes the double-stranded sequence 5'-GGCC-3' and cleaves after G-2. The protein is Type II restriction enzyme HaeIII (haeIIIR) of Haemophilus aegyptius.